Here is a 338-residue protein sequence, read N- to C-terminus: Putative transposase for insertion sequence element IS4SA (338 aa).

This sequence belongs to the transposase 11 family.

This is Putative transposase for insertion sequence element IS4SA from Synechocystis sp. (strain ATCC 27184 / PCC 6803 / Kazusa).